A 428-amino-acid chain; its full sequence is MFVDQVKIYVKGGDGGNGMVAYRREKYVPKGGPAGGDGGKGADVVFVVEEGLRTLMDFRYQRHFKADRGQHGMSKGQHGRKSEDLIVKVPPGTVVKDEKTGQILADLVTHGQTAVIAKGGRGGRGNSRFATATNPAPEIAENGEPGQERDVILELKVLADVGLVGFPSVGKSTLLSVVSSARPKIAEYHFTTIVPNLGVVETGDNRSFVMADLPGLIEGAHAGVGLGHQFLRHIERTRVIVHVIDMSGLEGRDPYEDYVTINNELKEYNLRLTERPQVVVANKMDMPDAEENLQAFKEKVGDEVKIFPISAVTKQGVRDLLFEVANLLETTPEFPIHEVADESDTSVMYKLETEGVKFDITRESDGTFVISGYDIEKTFKMTDFSRDESVRRFARQMRGMGIDEALRARGAKDGDIVKILEYEFEFID.

Positions 1–158 constitute an Obg domain; sequence MFVDQVKIYV…RDVILELKVL (158 aa). The region spanning 159–329 is the OBG-type G domain; the sequence is ADVGLVGFPS…LLFEVANLLE (171 aa). Residues 165 to 172, 190 to 194, 212 to 215, 282 to 285, and 310 to 312 each bind GTP; these read GFPSVGKS, FTTIV, DLPG, NKMD, and SAV. Mg(2+) contacts are provided by S172 and T192. Positions 350-428 constitute an OCT domain; sequence KLETEGVKFD…ILEYEFEFID (79 aa).

This sequence belongs to the TRAFAC class OBG-HflX-like GTPase superfamily. OBG GTPase family. Monomer. It depends on Mg(2+) as a cofactor.

Its subcellular location is the cytoplasm. Functionally, an essential GTPase which binds GTP, GDP and possibly (p)ppGpp with moderate affinity, with high nucleotide exchange rates and a fairly low GTP hydrolysis rate. Plays a role in control of the cell cycle, stress response, ribosome biogenesis and in those bacteria that undergo differentiation, in morphogenesis control. The polypeptide is GTPase Obg (Bacillus cereus (strain Q1)).